A 163-amino-acid polypeptide reads, in one-letter code: DNA endonuclease I-CreI (163 aa).

2 residues coordinate Mg(2+): G19 and D20. Interaction with DNA regions lie at residues 26-38, 44-47, 68-70, and 138-143; these read QIKPNQSYKFKHQ, QVTQ, RDR, and SKTRKT.

Belongs to the LAGLIDADG endonuclease family. As to quaternary structure, homodimer. Mg(2+) serves as cofactor. The cofactor is Mn(2+). It depends on Co(2+) as a cofactor. Requires Ni(2+) as cofactor. Zn(2+) is required as a cofactor.

It localises to the plastid. It is found in the chloroplast. Functionally, endonuclease involved in group I intron homing. Recognizes and cleaves a 19-24 bp palindromic DNA site. This Chlamydomonas reinhardtii (Chlamydomonas smithii) protein is DNA endonuclease I-CreI.